The sequence spans 661 residues: Sodium/potassium/calcium exchanger 2 (661 aa).

Residues 1-38 (MDLQQSTTITSLEKWCLDESLSGCRRHYSVKKKLKLIR) lie on the Cytoplasmic side of the membrane. The helical transmembrane segment at 39–59 (VLGLFMGLVAISTVSFSISAF) threads the bilayer. Residues 60-132 (SETDTQSTGE…DIFSLEERRK (73 aa)) lie on the Extracellular side of the membrane. A disordered region spans residues 99 to 120 (PQPPLSKEGESENSTDHAQGDY). The segment covering 105–120 (KEGESENSTDHAQGDY) has biased composition (basic and acidic residues). An N-linked (GlcNAc...) asparagine glycan is attached at asparagine 111. The helical transmembrane segment at 133-153 (GAIILHVIGMIYMFIALAIVC) threads the bilayer. At 154 to 178 (DEFFVPSLTVITEKLGISDDVAGAT) the chain is on the cytoplasmic side. One copy of the Alpha-1 repeat lies at 174–214 (VAGATFMAAGGSAPELFTSLIGVFIAHSNVGIGTIVGSAVF). The helical transmembrane segment at 179–199 (FMAAGGSAPELFTSLIGVFIA) threads the bilayer. Residues 200–204 (HSNVG) are Extracellular-facing. Residues 205–225 (IGTIVGSAVFNILFVIGMCAL) traverse the membrane as a helical segment. Residues 226-243 (FSREILNLTWWPLFRDVS) lie on the Cytoplasmic side of the membrane. Residues 244 to 264 (FYIVDLIMLIIFFLDNVIMWW) traverse the membrane as a helical segment. Glutamate 265 is a topological domain (extracellular). A helical membrane pass occupies residues 266-286 (SLLLLTAYFCYVVFMKFNVQV). Residues 287 to 497 (EKWVKQMINR…PDVRKPSSRK (211 aa)) are Cytoplasmic-facing. A disordered region spans residues 306-336 (EAQAKPSAARDKDEPTLPAKPRLQRGGSSAS). 2 positions are modified to phosphoserine: serine 336 and serine 340. Residues 397-439 (DENERQNGAANHVEKIELPNSTSTDVEMTPSSDASEPVQNGNL) are disordered. Over residues 415–439 (PNSTSTDVEMTPSSDASEPVQNGNL) the composition is skewed to polar residues. Residues 498–518 (FFPITFFGSITWIAVFSYLMV) form a helical membrane-spanning segment. Topologically, residues 519–533 (WWAHQVGETIGISEE) are extracellular. A helical transmembrane segment spans residues 534-554 (IMGLTILAAGTSIPDLITSVI). One copy of the Alpha-2 repeat lies at 541–572 (AAGTSIPDLITSVIVARKGLGDMAVSSSVGSN). Topologically, residues 555-569 (VARKGLGDMAVSSSV) are cytoplasmic. Residues 570–590 (GSNIFDITVGLPLPWLLYTVI) form a helical membrane-spanning segment. The Extracellular segment spans residues 591–602 (HRFQPVAVSSNG). Residues 603 to 623 (LFCAIVLLFIMLLFVILSIAL) traverse the membrane as a helical segment. The Cytoplasmic segment spans residues 624–630 (CKWRMNK). The helical transmembrane segment at 631–651 (ILGFIMFGLYFVFLVVSVLLE) threads the bilayer. The Extracellular portion of the chain corresponds to 652 to 661 (DRILTCPVSI).

Belongs to the Ca(2+):cation antiporter (CaCA) (TC 2.A.19) family. SLC24A subfamily.

Its subcellular location is the cell membrane. It carries out the reaction Ca(2+)(out) + K(+)(out) + 4 Na(+)(in) = Ca(2+)(in) + K(+)(in) + 4 Na(+)(out). In terms of biological role, calcium, potassium:sodium antiporter that transports 1 Ca(2+) and 1 K(+) in exchange for 4 Na(+). Required for learming and memory by regulating neuronal Ca(2+), which is essential for the development of synaptic plasticity. The polypeptide is Sodium/potassium/calcium exchanger 2 (SLC24A2) (Homo sapiens (Human)).